We begin with the raw amino-acid sequence, 612 residues long: Dihydroxy-acid dehydratase (612 aa).

A Mg(2+)-binding site is contributed by Asp-81. A [2Fe-2S] cluster-binding site is contributed by Cys-122. Positions 123 and 124 each coordinate Mg(2+). Lys-124 bears the N6-carboxylysine mark. Cys-193 contributes to the [2Fe-2S] cluster binding site. Position 489 (Glu-489) interacts with Mg(2+). Ser-515 (proton acceptor) is an active-site residue.

It belongs to the IlvD/Edd family. Homodimer. The cofactor is [2Fe-2S] cluster. Mg(2+) is required as a cofactor.

It catalyses the reaction (2R)-2,3-dihydroxy-3-methylbutanoate = 3-methyl-2-oxobutanoate + H2O. The catalysed reaction is (2R,3R)-2,3-dihydroxy-3-methylpentanoate = (S)-3-methyl-2-oxopentanoate + H2O. Its pathway is amino-acid biosynthesis; L-isoleucine biosynthesis; L-isoleucine from 2-oxobutanoate: step 3/4. It functions in the pathway amino-acid biosynthesis; L-valine biosynthesis; L-valine from pyruvate: step 3/4. Its function is as follows. Functions in the biosynthesis of branched-chain amino acids. Catalyzes the dehydration of (2R,3R)-2,3-dihydroxy-3-methylpentanoate (2,3-dihydroxy-3-methylvalerate) into 2-oxo-3-methylpentanoate (2-oxo-3-methylvalerate) and of (2R)-2,3-dihydroxy-3-methylbutanoate (2,3-dihydroxyisovalerate) into 2-oxo-3-methylbutanoate (2-oxoisovalerate), the penultimate precursor to L-isoleucine and L-valine, respectively. This is Dihydroxy-acid dehydratase from Teredinibacter turnerae (strain ATCC 39867 / T7901).